Consider the following 132-residue polypeptide: Small ribosomal subunit protein uS8 (132 aa).

It belongs to the universal ribosomal protein uS8 family. As to quaternary structure, part of the 30S ribosomal subunit. Contacts proteins S5 and S12.

In terms of biological role, one of the primary rRNA binding proteins, it binds directly to 16S rRNA central domain where it helps coordinate assembly of the platform of the 30S subunit. This Chelativorans sp. (strain BNC1) protein is Small ribosomal subunit protein uS8.